The sequence spans 697 residues: Elongation factor G (697 aa).

One can recognise a tr-type G domain in the interval 8-290 (ERYRNIGIMA…AVLSYMPSPV (283 aa)). GTP-binding positions include 17-24 (AHIDAGKT), 88-92 (DTPGH), and 142-145 (NKMD).

Belongs to the TRAFAC class translation factor GTPase superfamily. Classic translation factor GTPase family. EF-G/EF-2 subfamily.

It is found in the cytoplasm. Catalyzes the GTP-dependent ribosomal translocation step during translation elongation. During this step, the ribosome changes from the pre-translocational (PRE) to the post-translocational (POST) state as the newly formed A-site-bound peptidyl-tRNA and P-site-bound deacylated tRNA move to the P and E sites, respectively. Catalyzes the coordinated movement of the two tRNA molecules, the mRNA and conformational changes in the ribosome. In Nitrosococcus oceani (strain ATCC 19707 / BCRC 17464 / JCM 30415 / NCIMB 11848 / C-107), this protein is Elongation factor G.